Here is a 438-residue protein sequence, read N- to C-terminus: 3-phosphoshikimate 1-carboxyvinyltransferase (438 aa).

Residues Lys26, Ser27, and Arg31 each coordinate 3-phosphoshikimate. Lys26 lines the phosphoenolpyruvate pocket. Positions 99 and 127 each coordinate phosphoenolpyruvate. Residues Ser170, Ser171, Gln172, Ser199, Glu314, and His343 each coordinate 3-phosphoshikimate. Gln172 is a phosphoenolpyruvate binding site. The active-site Proton acceptor is Glu314. Phosphoenolpyruvate-binding residues include Arg347, Arg388, and Lys413.

It belongs to the EPSP synthase family. Monomer.

Its subcellular location is the cytoplasm. It carries out the reaction 3-phosphoshikimate + phosphoenolpyruvate = 5-O-(1-carboxyvinyl)-3-phosphoshikimate + phosphate. Its pathway is metabolic intermediate biosynthesis; chorismate biosynthesis; chorismate from D-erythrose 4-phosphate and phosphoenolpyruvate: step 6/7. Its function is as follows. Catalyzes the transfer of the enolpyruvyl moiety of phosphoenolpyruvate (PEP) to the 5-hydroxyl of shikimate-3-phosphate (S3P) to produce enolpyruvyl shikimate-3-phosphate and inorganic phosphate. This Mycobacterium sp. (strain JLS) protein is 3-phosphoshikimate 1-carboxyvinyltransferase.